Consider the following 442-residue polypeptide: tRNA-2-methylthio-N(6)-dimethylallyladenosine synthase (442 aa).

Positions 5–122 (KKVFIKTLGC…LPEMIKRKQS (118 aa)) constitute an MTTase N-terminal domain. Residues C14, C51, C85, C159, C163, and C166 each contribute to the [4Fe-4S] cluster site. One can recognise a Radical SAM core domain in the interval 145 to 378 (KAEGAKAYVS…DLLNSNAQII (234 aa)). Positions 380-442 (RQMVGTEQRI…LPNSLRGELI (63 aa)) constitute a TRAM domain.

This sequence belongs to the methylthiotransferase family. MiaB subfamily. As to quaternary structure, monomer. It depends on [4Fe-4S] cluster as a cofactor.

The protein resides in the cytoplasm. It catalyses the reaction N(6)-dimethylallyladenosine(37) in tRNA + (sulfur carrier)-SH + AH2 + 2 S-adenosyl-L-methionine = 2-methylsulfanyl-N(6)-dimethylallyladenosine(37) in tRNA + (sulfur carrier)-H + 5'-deoxyadenosine + L-methionine + A + S-adenosyl-L-homocysteine + 2 H(+). Functionally, catalyzes the methylthiolation of N6-(dimethylallyl)adenosine (i(6)A), leading to the formation of 2-methylthio-N6-(dimethylallyl)adenosine (ms(2)i(6)A) at position 37 in tRNAs that read codons beginning with uridine. In Francisella philomiragia subsp. philomiragia (strain ATCC 25017 / CCUG 19701 / FSC 153 / O#319-036), this protein is tRNA-2-methylthio-N(6)-dimethylallyladenosine synthase.